Here is a 476-residue protein sequence, read N- to C-terminus: Cysteine--tRNA ligase (476 aa).

Zn(2+) is bound at residue Cys-29. The 'HIGH' region signature appears at 31–41; that stretch reads PTVYDYTHLGH. Positions 209, 234, and 238 each coordinate Zn(2+). The 'KMSKS' region signature appears at 266–270; that stretch reads KMSKS. Lys-269 serves as a coordination point for ATP.

It belongs to the class-I aminoacyl-tRNA synthetase family. It depends on Zn(2+) as a cofactor.

The protein resides in the cytoplasm. It carries out the reaction tRNA(Cys) + L-cysteine + ATP = L-cysteinyl-tRNA(Cys) + AMP + diphosphate. In Thermococcus onnurineus (strain NA1), this protein is Cysteine--tRNA ligase.